Reading from the N-terminus, the 368-residue chain is Putative potassium channel KAT5 (368 aa).

3 consecutive transmembrane segments (helical) span residues Trp33–Leu53, Leu97–Glu117, and Leu132–Phe152. The segment at residues Cys180–Ala199 is an intramembrane region (pore-forming). The chain crosses the membrane as a helical span at residues Leu206–Ile226. Asn225–Val344 lines the a nucleoside 3',5'-cyclic phosphate pocket.

Belongs to the potassium channel family. Plant (TC 1.A.1.4) subfamily.

Its subcellular location is the membrane. Putative inward-rectifying potassium channel. This Oryza sativa subsp. japonica (Rice) protein is Putative potassium channel KAT5.